Consider the following 409-residue polypeptide: Serine/threonine transporter SstT (409 aa).

Transmembrane regions (helical) follow at residues 24–44, 48–68, 82–102, 142–162, 194–214, 218–238, 292–312, 319–339, and 365–385; these read LALG…AGLF, FVGA…AATI, IIVL…IAGM, AIAN…GAAL, LGIF…ALAG, LLAV…PAIV, IPLG…VLAM, GIQV…VSAC, and VAMQ…SAET.

The protein belongs to the dicarboxylate/amino acid:cation symporter (DAACS) (TC 2.A.23) family.

The protein resides in the cell inner membrane. The catalysed reaction is L-serine(in) + Na(+)(in) = L-serine(out) + Na(+)(out). The enzyme catalyses L-threonine(in) + Na(+)(in) = L-threonine(out) + Na(+)(out). Functionally, involved in the import of serine and threonine into the cell, with the concomitant import of sodium (symport system). The sequence is that of Serine/threonine transporter SstT from Neisseria meningitidis serogroup C (strain 053442).